Reading from the N-terminus, the 276-residue chain is N-acetylmuramoyl-L-alanine amidase AmiD (276 aa).

Positions 1–16 (MRRFFWLVAAALLLAG) are cleaved as a signal peptide. A lipid anchor (N-palmitoyl cysteine) is attached at Cys17. A lipid anchor (S-diacylglycerol cysteine) is attached at Cys17. In terms of domain architecture, N-acetylmuramoyl-L-alanine amidase spans 42 to 179 (PRIKVLVIHY…APQRKDDPGP (138 aa)). His50 is a binding site for Zn(2+). Residue 51–52 (YT) participates in substrate binding. The Proton acceptor role is filled by Glu119. The Zn(2+) site is built by His166 and Asp176.

Belongs to the N-acetylmuramoyl-L-alanine amidase 2 family. Requires Zn(2+) as cofactor.

Its subcellular location is the cell outer membrane. It carries out the reaction Hydrolyzes the link between N-acetylmuramoyl residues and L-amino acid residues in certain cell-wall glycopeptides.. This chain is N-acetylmuramoyl-L-alanine amidase AmiD (amiD), found in Escherichia coli (strain K12).